The primary structure comprises 486 residues: GPI-anchored wall transfer protein 1 (486 aa).

A helical membrane pass occupies residues 20 to 42 (ILEINVVTSIALTSYLCANLISY). Residue N43 is glycosylated (N-linked (GlcNAc...) asparagine). 8 helical membrane passes run 48–68 (IPLG…FTLY), 71–91 (DIYL…LLNY), 119–139 (PFLT…ILAV), 153–173 (TWGT…NGIV), 197–216 (FAAT…RLFF), 229–249 (YGVH…LVLI), 254–274 (SYIP…LFLI), and 299–319 (LISF…GFFI). The N-linked (GlcNAc...) asparagine glycan is linked to N342. 2 helical membrane-spanning segments follow: residues 355 to 375 (SLGL…LYLI) and 387 to 407 (MPYV…YSLV). N413 carries an N-linked (GlcNAc...) asparagine glycan. The next 2 helical transmembrane spans lie at 432-452 (LAMF…IPTI) and 458-478 (VSIV…FSLY).

The protein belongs to the PIGW family.

Its subcellular location is the endoplasmic reticulum membrane. It participates in glycolipid biosynthesis; glycosylphosphatidylinositol-anchor biosynthesis. Its function is as follows. Probable acetyltransferase, which acetylates the inositol ring of phosphatidylinositol during biosynthesis of GPI-anchor. The protein is GPI-anchored wall transfer protein 1 (GWT1) of Candida glabrata (strain ATCC 2001 / BCRC 20586 / JCM 3761 / NBRC 0622 / NRRL Y-65 / CBS 138) (Yeast).